We begin with the raw amino-acid sequence, 389 residues long: UDP-GlcNAc:betaGal beta-1,3-N-acetylglucosaminyltransferase 8 (389 aa).

The Cytoplasmic portion of the chain corresponds to 1-7 (MRCRKCQ). A helical; Signal-anchor for type II membrane protein transmembrane segment spans residues 8–24 (LCLSALLTLLGLKVYIE). Over 25-389 (WTSESWLKKA…RHLWVPELQC (365 aa)) the chain is Lumenal. Residues 36-57 (PRGALPSPTPPNAEPTLPTNLS) are disordered. 2 N-linked (GlcNAc...) asparagine glycosylation sites follow: asparagine 55 and asparagine 212.

This sequence belongs to the glycosyltransferase 31 family. As to quaternary structure, interacts with B3GNT2; this interaction greatly increases B3GNT2 catalytic activity, independently of B3GNT8 enzymatic activity.

Its subcellular location is the golgi apparatus membrane. The protein operates within protein modification; protein glycosylation. Functionally, beta-1,3-N-acetylglucosaminyltransferase that plays a role in the elongation of specific branch structures of multiantennary N-glycans. Has strong activity towards tetraantennary N-glycans and 2,6 triantennary glycans. The sequence is that of UDP-GlcNAc:betaGal beta-1,3-N-acetylglucosaminyltransferase 8 from Mus musculus (Mouse).